The following is a 391-amino-acid chain: Transposase for insertion sequence element IS905 (391 aa).

This sequence belongs to the transposase mutator family.

Functionally, required for the transposition of the insertion element. In Lactococcus lactis subsp. lactis (strain IL1403) (Streptococcus lactis), this protein is Transposase for insertion sequence element IS905 (tra905).